A 436-amino-acid chain; its full sequence is Probable glucose-6-phosphate isomerase (436 aa).

Glu272 serves as the catalytic Proton donor. Residues His293 and Lys404 contribute to the active site.

This sequence belongs to the GPI family.

It localises to the cytoplasm. It catalyses the reaction alpha-D-glucose 6-phosphate = beta-D-fructose 6-phosphate. It functions in the pathway carbohydrate biosynthesis; gluconeogenesis. It participates in carbohydrate degradation; glycolysis; D-glyceraldehyde 3-phosphate and glycerone phosphate from D-glucose: step 2/4. Catalyzes the reversible isomerization of glucose-6-phosphate to fructose-6-phosphate. This Haloarcula marismortui (strain ATCC 43049 / DSM 3752 / JCM 8966 / VKM B-1809) (Halobacterium marismortui) protein is Probable glucose-6-phosphate isomerase.